The primary structure comprises 693 residues: Polyribonucleotide nucleotidyltransferase (693 aa).

D489 and D495 together coordinate Mg(2+). Residues 556–615 (PQIHVMNINPAKIKDVVGRGGATVKGIVEKTGAQIDTSDSGEVKVFAKDKKSMDMAVAMI) enclose the KH domain. One can recognise an S1 motif domain in the interval 625-693 (GQVYKGKIVK…GRVKLSLVAR (69 aa)).

This sequence belongs to the polyribonucleotide nucleotidyltransferase family. In terms of assembly, component of the RNA degradosome, which is a multiprotein complex involved in RNA processing and mRNA degradation. Requires Mg(2+) as cofactor.

The protein localises to the cytoplasm. It catalyses the reaction RNA(n+1) + phosphate = RNA(n) + a ribonucleoside 5'-diphosphate. In terms of biological role, involved in mRNA degradation. Catalyzes the phosphorolysis of single-stranded polyribonucleotides processively in the 3'- to 5'-direction. The chain is Polyribonucleotide nucleotidyltransferase from Francisella tularensis subsp. mediasiatica (strain FSC147).